Here is a 506-residue protein sequence, read N- to C-terminus: DNA nucleotidylexotransferase (506 aa).

Residues 11-17 carry the Nuclear localization signal motif; it reads SQRKRQK. One can recognise a BRCT domain in the interval 27 to 124; sequence GYEIKFNKLV…RPVDLEKKYH (98 aa). The tract at residues 258 to 262 is involved in DNA binding; the sequence is VGVKT. A 2'-deoxyribonucleoside 5'-triphosphate is bound by residues 333 to 338 and 342 to 345; these read GFRRGK and HDID. Residues Asp343, Asp345, and Asp430 each coordinate Mg(2+). 445 to 446 contacts a 2'-deoxyribonucleoside 5'-triphosphate; it reads GW.

Belongs to the DNA polymerase type-X family. Mg(2+) serves as cofactor.

It localises to the nucleus. It carries out the reaction DNA(n) + a 2'-deoxyribonucleoside 5'-triphosphate = DNA(n+1) + diphosphate. Functionally, template-independent DNA polymerase which catalyzes the random addition of deoxynucleoside 5'-triphosphate to the 3'-end of a DNA initiator. One of the in vivo functions of this enzyme is the addition of nucleotides at the junction (N region) of rearranged Ig heavy chain and T-cell receptor gene segments during the maturation of B- and T-cells. The protein is DNA nucleotidylexotransferase (DNTT) of Gallus gallus (Chicken).